The sequence spans 374 residues: L-serine/homoserine O-acetyltransferase (374 aa).

Positions 46–357 constitute an AB hydrolase-1 domain; the sequence is AVLVLTGLSP…TPAGHDAFLV (312 aa). Residue Ser-149 is the Nucleophile of the active site. Active-site residues include Asp-319 and His-352.

It belongs to the AB hydrolase superfamily. MetX family. As to quaternary structure, homodimer.

The protein localises to the cytoplasm. The enzyme catalyses L-serine + acetyl-CoA = O-acetyl-L-serine + CoA. It catalyses the reaction L-homoserine + acetyl-CoA = O-acetyl-L-homoserine + CoA. The protein operates within antibiotic biosynthesis. Involved in the biosynthesis of the antibiotic D-cycloserine (DCS), a cyclic structural analog of D-alanine, used as an antitubercular agent. Catalyzes the transfer of the acetyl group from acetyl-CoA to the hydroxyl group of L-serine to yield the activated serine, O-acetyl-L-serine. It prefers L-serine over L-homoserine. The polypeptide is L-serine/homoserine O-acetyltransferase (Streptomyces lavendulae).